Here is a 96-residue protein sequence, read N- to C-terminus: Putative membrane protein insertion efficiency factor (96 aa).

Residues 68-96 (DPVPEHFPARHPRPQGSPPTDHPPTDQPS) are disordered. Residues 82–96 (QGSPPTDHPPTDQPS) show a composition bias toward pro residues.

The protein belongs to the UPF0161 family.

The protein resides in the cell membrane. Could be involved in insertion of integral membrane proteins into the membrane. This is Putative membrane protein insertion efficiency factor from Deinococcus radiodurans (strain ATCC 13939 / DSM 20539 / JCM 16871 / CCUG 27074 / LMG 4051 / NBRC 15346 / NCIMB 9279 / VKM B-1422 / R1).